A 271-amino-acid polypeptide reads, in one-letter code: Protein FANTASTIC FOUR 1 (271 aa).

Residues 114-168 form the FAF domain; the sequence is NSFPPPLNSVNGFNNSRMVKSYKEDGRLVVQAIRVCSPPRCFVSERREGRLRLCL. A disordered region spans residues 174–255; it reads NSQDAEEEFE…KRRCNENGCE (82 aa). Positions 177 to 224 are enriched in acidic residues; the sequence is DAEEEFEEEDEDDQYDAEEEEEEEEEEEEEEEEEEEEEEEEEEEDEEG. Positions 237-247 are enriched in basic residues; sequence GNKKVSNRPKR.

The protein belongs to the fantastic four family. As to expression, expressed in the shoot apex, stamens, anthers and young siliques. Detected in provascular and vascular tissue.

Able to repress WUS when constitutively overexpressed, but have no effect on CLV3. The sequence is that of Protein FANTASTIC FOUR 1 (FAF1) from Arabidopsis thaliana (Mouse-ear cress).